Here is a 261-residue protein sequence, read N- to C-terminus: Indole-3-glycerol phosphate synthase (261 aa).

The protein belongs to the TrpC family.

It catalyses the reaction 1-(2-carboxyphenylamino)-1-deoxy-D-ribulose 5-phosphate + H(+) = (1S,2R)-1-C-(indol-3-yl)glycerol 3-phosphate + CO2 + H2O. It participates in amino-acid biosynthesis; L-tryptophan biosynthesis; L-tryptophan from chorismate: step 4/5. The sequence is that of Indole-3-glycerol phosphate synthase from Burkholderia ambifaria (strain MC40-6).